The primary structure comprises 196 residues: Imidazoleglycerol-phosphate dehydratase (196 aa).

It belongs to the imidazoleglycerol-phosphate dehydratase family.

Its subcellular location is the cytoplasm. It carries out the reaction D-erythro-1-(imidazol-4-yl)glycerol 3-phosphate = 3-(imidazol-4-yl)-2-oxopropyl phosphate + H2O. The protein operates within amino-acid biosynthesis; L-histidine biosynthesis; L-histidine from 5-phospho-alpha-D-ribose 1-diphosphate: step 6/9. This Akkermansia muciniphila (strain ATCC BAA-835 / DSM 22959 / JCM 33894 / BCRC 81048 / CCUG 64013 / CIP 107961 / Muc) protein is Imidazoleglycerol-phosphate dehydratase.